A 284-amino-acid chain; its full sequence is Nucleotide-binding protein Shewmr7_3352 (284 aa).

8 to 15 (GRSGSGKS) is a binding site for ATP. 56 to 59 (DVRN) is a binding site for GTP.

Belongs to the RapZ-like family.

In terms of biological role, displays ATPase and GTPase activities. The protein is Nucleotide-binding protein Shewmr7_3352 of Shewanella sp. (strain MR-7).